The following is a 188-amino-acid chain: MGRYSREPEIAAKSCKARGSNLRVHFKNTCETANAIRKMPLKRAVAYLKNVIGHKECVPFRRFNGGVGRCAQAKQWGTTQGRWPKKSAEFLLQMLRNAESNADYSGLDVDRLVIEHIQVNRAACLRRRTYRAHGRINPYMSSPCHIEMWLTEAESTPEGAKKGKKKKGTKDAVEKSSKRVKTAATAAH.

The disordered stretch occupies residues serine 155–histidine 188.

It belongs to the universal ribosomal protein uL22 family.

The polypeptide is Large ribosomal subunit protein uL22 (RpL17) (Agriotes lineatus (Lined click beetle)).